The following is a 306-amino-acid chain: N-acetylmuramic acid 6-phosphate etherase (306 aa).

The SIS domain maps to 55–218 (AAATLLAGGR…STGAMIKIGK (164 aa)). The active-site Proton donor is glutamate 83. The active site involves glutamate 114.

This sequence belongs to the GCKR-like family. MurNAc-6-P etherase subfamily. In terms of assembly, homodimer.

The enzyme catalyses N-acetyl-D-muramate 6-phosphate + H2O = N-acetyl-D-glucosamine 6-phosphate + (R)-lactate. Its pathway is amino-sugar metabolism; 1,6-anhydro-N-acetylmuramate degradation. The protein operates within amino-sugar metabolism; N-acetylmuramate degradation. It participates in cell wall biogenesis; peptidoglycan recycling. In terms of biological role, specifically catalyzes the cleavage of the D-lactyl ether substituent of MurNAc 6-phosphate, producing GlcNAc 6-phosphate and D-lactate. Together with AnmK, is also required for the utilization of anhydro-N-acetylmuramic acid (anhMurNAc) either imported from the medium or derived from its own cell wall murein, and thus plays a role in cell wall recycling. In Erwinia tasmaniensis (strain DSM 17950 / CFBP 7177 / CIP 109463 / NCPPB 4357 / Et1/99), this protein is N-acetylmuramic acid 6-phosphate etherase.